The following is a 537-amino-acid chain: Tyrosine-protein kinase Fyn (537 aa).

Gly2 carries the N-myristoyl glycine lipid modification. 2 S-palmitoyl cysteine lipidation sites follow: Cys3 and Cys6. Residue Thr12 is modified to Phosphothreonine; by PKC. The disordered stretch occupies residues 14–35; it reads LTEERDGSLNQSSGYRYGTDPT. Phosphoserine is present on residues Ser21 and Ser26. The SH3 domain maps to 82 to 143; the sequence is TGVTLFVALY…PSNYVAPVDS (62 aa). The SH2 domain maps to 149 to 246; sequence WYFGKLGRKD…GLCCRLVVPC (98 aa). Tyr185 bears the Phosphotyrosine mark. The region spanning 271-524 is the Protein kinase domain; the sequence is LQLIKRLGNG…YLQSFLEDYF (254 aa). Residues 277–285 and Lys299 each bind ATP; that span reads LGNGQFGEV. Asp390 (proton acceptor) is an active-site residue. Position 420 is a phosphotyrosine; by autocatalysis (Tyr420). Tyr531 carries the post-translational modification Phosphotyrosine; by CSK.

Belongs to the protein kinase superfamily. Tyr protein kinase family. SRC subfamily. In terms of assembly, interacts (via its SH3 domain) with PIK3R1 and PRMT8. Interacts with FYB1, PAG1, and SH2D1A. Interacts with CD79A (tyrosine-phosphorylated form); the interaction increases FYN activity. Interacts (via SH2 domain) with CSF1R (tyrosine phosphorylated). Interacts with TOM1L1 (phosphorylated form). Interacts with KDR (tyrosine phosphorylated). Interacts (via SH3 domain) with KLHL2 (via N-terminus). Interacts with SH2D1A and SLAMF1. Interacts with ITCH; the interaction phosphorylates ITCH and negatively regulates its activity. Interacts with FASLG. Interacts with RUNX3. Interacts with KIT. Interacts with EPHA8; possible downstream effector of EPHA8 in regulation of cell adhesion. Interacts with PTK2/FAK1; this interaction leads to PTK2/FAK1 phosphorylation and activation. Interacts with CAV1; this interaction couples integrins to the Ras-ERK pathway. Interacts with UNC119. Interacts (via SH2 domain) with PTPRH (phosphorylated form). Interacts with PTPRO (phosphorylated form). Interacts with PTPRB (phosphorylated form). Interacts with FYB2. Interacts with DSCAM. Interacts with SKAP1 and FYB1; this interaction promotes the phosphorylation of CLNK. Interacts with NEDD9; in the presence of PTK2. (Microbial infection) Interacts (via its SH3 domain) with hepatitis E virus/HEV protein ORF3. Requires Mn(2+) as cofactor. Post-translationally, autophosphorylated at Tyr-420. Phosphorylation on the C-terminal tail at Tyr-531 by CSK maintains the enzyme in an inactive state. PTPRC/CD45 dephosphorylates Tyr-531 leading to activation. Ultraviolet B (UVB) strongly increase phosphorylation at Thr-12 and kinase activity, and promotes translocation from the cytoplasm to the nucleus. Dephosphorylation at Tyr-420 by PTPN2 negatively regulates T-cell receptor signaling. Phosphorylated at tyrosine residues, which can be enhanced by NTN1. In terms of processing, palmitoylated. Palmitoylation at Cys-3 and Cys-6, probably by ZDHHC21, regulates subcellular location. In terms of tissue distribution, isoform 1 is highly expressed in the brain. Isoform 2 is expressed in cells of hemopoietic lineages, especially T-lymphocytes.

The protein resides in the cytoplasm. It is found in the nucleus. Its subcellular location is the cell membrane. The protein localises to the perikaryon. The catalysed reaction is L-tyrosyl-[protein] + ATP = O-phospho-L-tyrosyl-[protein] + ADP + H(+). With respect to regulation, inhibited by phosphorylation of Tyr-531 by leukocyte common antigen and activated by dephosphorylation of this site. Functionally, non-receptor tyrosine-protein kinase that plays a role in many biological processes including regulation of cell growth and survival, cell adhesion, integrin-mediated signaling, cytoskeletal remodeling, cell motility, immune response and axon guidance. Inactive FYN is phosphorylated on its C-terminal tail within the catalytic domain. Following activation by PKA, the protein subsequently associates with PTK2/FAK1, allowing PTK2/FAK1 phosphorylation, activation and targeting to focal adhesions. Involved in the regulation of cell adhesion and motility through phosphorylation of CTNNB1 (beta-catenin) and CTNND1 (delta-catenin). Regulates cytoskeletal remodeling by phosphorylating several proteins including the actin regulator WAS and the microtubule-associated proteins MAP2 and MAPT. Promotes cell survival by phosphorylating AGAP2/PIKE-A and preventing its apoptotic cleavage. Participates in signal transduction pathways that regulate the integrity of the glomerular slit diaphragm (an essential part of the glomerular filter of the kidney) by phosphorylating several slit diaphragm components including NPHS1, KIRREL1 and TRPC6. Plays a role in neural processes by phosphorylating DPYSL2, a multifunctional adapter protein within the central nervous system, ARHGAP32, a regulator for Rho family GTPases implicated in various neural functions, and SNCA, a small pre-synaptic protein. Involved in reelin signaling by mediating phosphorylation of DAB1 following reelin (RELN)-binding to its receptor. Participates in the downstream signaling pathways that lead to T-cell differentiation and proliferation following T-cell receptor (TCR) stimulation. Phosphorylates PTK2B/PYK2 in response to T-cell receptor activation. Also participates in negative feedback regulation of TCR signaling through phosphorylation of PAG1, thereby promoting interaction between PAG1 and CSK and recruitment of CSK to lipid rafts. CSK maintains LCK and FYN in an inactive form. Promotes CD28-induced phosphorylation of VAV1. In mast cells, phosphorylates CLNK after activation of immunoglobulin epsilon receptor signaling. Can also promote CD244-mediated NK cell activation. The sequence is that of Tyrosine-protein kinase Fyn (FYN) from Homo sapiens (Human).